The sequence spans 151 residues: High mobility group B protein 14 (151 aa).

Disordered regions lie at residues 1–62 and 132–151; these read MTKR…QTKM and TKRM…DYSE. Low complexity predominate over residues 7-20; the sequence is KSGPLSPSCSGGSS. Basic residues predominate over residues 35–56; that stretch reads RSTRLRLQPLRKPKTSPKKKPV. The HMG box DNA-binding region spans 63-132; it reads PKKPATAFFF…EFHRAMTEYT (70 aa). Positions 132–142 are enriched in basic and acidic residues; the sequence is TKRMESGAHDE. Serine 150 is modified (phosphoserine).

Belongs to the HMGB family.

The protein localises to the nucleus. The chain is High mobility group B protein 14 (HMGB14) from Arabidopsis thaliana (Mouse-ear cress).